A 149-amino-acid chain; its full sequence is Large ribosomal subunit protein bL9 (149 aa).

The protein belongs to the bacterial ribosomal protein bL9 family.

In terms of biological role, binds to the 23S rRNA. In Dichelobacter nodosus (strain VCS1703A), this protein is Large ribosomal subunit protein bL9.